We begin with the raw amino-acid sequence, 275 residues long: 18S rRNA (guanine(1575)-N(7))-methyltransferase (275 aa).

A disordered region spans residues 256-275; the sequence is RGRKVAKDSKFTGRKRRHRF. Residues 257 to 264 carry the Nuclear localization signal motif; sequence GRKVAKDS.

Belongs to the class I-like SAM-binding methyltransferase superfamily. BUD23/WBSCR22 family. Interacts with TRM112. Interacts with ECM16.

Its subcellular location is the cytoplasm. It localises to the nucleus. The catalysed reaction is guanosine(1575) in yeast 18S rRNA + S-adenosyl-L-methionine = N(7)-methylguanosine(1575) in yeast 18S rRNA + S-adenosyl-L-homocysteine. Functionally, S-adenosyl-L-methionine-dependent methyltransferase that specifically methylates the N(7) position of guanine 1575 (m7G1575) in 18S rRNA. Requires the methyltransferase adapter protein TRM112 for full rRNA methyltransferase activity. Important for biogenesis end export of the 40S ribosomal subunit independent on its methyltransferase activity. Required for efficient cleavage of the primary 35S precursor rRNA at site A2. Involved in positioning the proximal bud pole signal. This is 18S rRNA (guanine(1575)-N(7))-methyltransferase (BUD23) from Saccharomyces cerevisiae (strain ATCC 204508 / S288c) (Baker's yeast).